Consider the following 1178-residue polypeptide: Phosphate system positive regulatory protein PHO81 (1178 aa).

The SPX domain maps to 1–169; the sequence is MKFGKYLEAR…QSHDKDFYLA (169 aa). Positions 210 to 250 are disordered; it reads QSSTFTNDDDDDNNTSNNNKHNNNNNNNNNNNNNNNNNNIL. A compositionally biased stretch (low complexity) spans 223-250; sequence NTSNNNKHNNNNNNNNNNNNNNNNNNIL. ANK repeat units lie at residues 423-452, 458-487, 506-535, 556-586, 591-620, and 624-653; these read HSRVPLHYAAELGKLEFVHSLLITNLLEDV, DSKTPLVLAITNNHIDVVRDLLTIGGANAS, VQFDPLNVACKFNNHDAAKLLLEIRSKQNA, TGLCTLHIVAKIGGDPQLIQLLIRYGADPNE, NKWTPIFYAVRSGHSEVITELLKHNARLDI, and NGHSPLFYALWESHVDVLNALLQRPLNLPS. The GP-PDE domain maps to 871–1178; it reads IINYEPYWKS…ELLFENNIDM (308 aa). Residue S956 is modified to Phosphoserine.

In terms of assembly, associates specifically with the PHO80-PHO85 and PCL7-PHO85 cyclin-CDK complexes, and much of this interaction is mediated through the PHO80 and PCL7 cyclin subunits. Interacts with the transcription factor PHO4. Post-translationally, phosphorylated by the cyclin-CDK PHO80-PHO85. Phosphorylation mediates the formation of a stable interaction with the cyclin-CDK and is required for function as an active inhibitor of the complex under phosphate starvation conditions.

It is found in the cytoplasm. Its subcellular location is the nucleus. Functionally, inhibits the kinase activity of the cyclin-CDKs PHO80-PHO85 and PCL7-PHO85 under low-phosphate conditions. This chain is Phosphate system positive regulatory protein PHO81 (PHO81), found in Saccharomyces cerevisiae (strain ATCC 204508 / S288c) (Baker's yeast).